The following is a 176-amino-acid chain: Large ribosomal subunit protein bL12m (176 aa).

The protein belongs to the bacterial ribosomal protein bL12 family. Component of the mitochondrial large ribosomal subunit (mt-LSU). Mature N.crassa 74S mitochondrial ribosomes consist of a small (37S) and a large (54S) subunit. The 37S small subunit contains a 16S ribosomal RNA (16S mt-rRNA) and 32 different proteins. The 54S large subunit contains a 23S rRNA (23S mt-rRNA) and 42 different proteins.

The protein resides in the mitochondrion. Component of the mitochondrial ribosome (mitoribosome), a dedicated translation machinery responsible for the synthesis of mitochondrial genome-encoded proteins, including at least some of the essential transmembrane subunits of the mitochondrial respiratory chain. The mitoribosomes are attached to the mitochondrial inner membrane and translation products are cotranslationally integrated into the membrane. In Neurospora crassa (strain ATCC 24698 / 74-OR23-1A / CBS 708.71 / DSM 1257 / FGSC 987), this protein is Large ribosomal subunit protein bL12m (mrpl12).